Here is a 238-residue protein sequence, read N- to C-terminus: MNPLLEIAEVSVGQHYYWELGGYELHGQVLITSWVVLGILAVLSFLGNTNLKSTPDGFQNFTELVTEFIRDLAKTQIGEEDYLKWVPFLGTIFLFIFVSNWSGALLPYRLIEIPNGELAAPTNDINTTVALALLTSISYFYAGISKKGLGYFSRYVEPAAFLLPINVLEDFTKPLSLSFRLFGNILADELVVGVLVALVPLIIPIPIMLLGVFTSAIQALVFATLAGAYINEALADHH.

5 helical membrane-spanning segments follow: residues 27–47 (GQVLITSWVVLGILAVLSFLG), 86–106 (VPFLGTIFLFIFVSNWSGALL), 125–145 (INTTVALALLTSISYFYAGIS), 190–210 (LVVGVLVALVPLIIPIPIMLL), and 211–231 (GVFTSAIQALVFATLAGAYIN).

Belongs to the ATPase A chain family. In terms of assembly, F-type ATPases have 2 components, F(1) - the catalytic core - and F(0) - the membrane proton channel. F(1) has five subunits: alpha(3), beta(3), gamma(1), delta(1), epsilon(1). F(0) has four main subunits: a(1), b(1), b'(1) and c(10-14). The alpha and beta chains form an alternating ring which encloses part of the gamma chain. F(1) is attached to F(0) by a central stalk formed by the gamma and epsilon chains, while a peripheral stalk is formed by the delta, b and b' chains.

The protein resides in the plastid. The protein localises to the chloroplast thylakoid membrane. F(1)F(0) ATP synthase produces ATP from ADP in the presence of a proton or sodium gradient. F-type ATPases consist of two structural domains, F(1) containing the extramembraneous catalytic core and F(0) containing the membrane proton channel, linked together by a central stalk and a peripheral stalk. During catalysis, ATP synthesis in the catalytic domain of F(1) is coupled via a rotary mechanism of the central stalk subunits to proton translocation. In Chlamydomonas reinhardtii (Chlamydomonas smithii), this protein is ATP synthase subunit a, chloroplastic.